The following is a 185-amino-acid chain: Elongation factor P (185 aa).

This sequence belongs to the elongation factor P family.

The protein resides in the cytoplasm. The protein operates within protein biosynthesis; polypeptide chain elongation. Functionally, involved in peptide bond synthesis. Stimulates efficient translation and peptide-bond synthesis on native or reconstituted 70S ribosomes in vitro. Probably functions indirectly by altering the affinity of the ribosome for aminoacyl-tRNA, thus increasing their reactivity as acceptors for peptidyl transferase. This chain is Elongation factor P, found in Geobacillus kaustophilus (strain HTA426).